Consider the following 392-residue polypeptide: Phosphopentomutase (392 aa).

6 residues coordinate Mn(2+): aspartate 13, aspartate 286, histidine 291, aspartate 327, histidine 328, and histidine 339.

Belongs to the phosphopentomutase family. The cofactor is Mn(2+).

It is found in the cytoplasm. It catalyses the reaction 2-deoxy-alpha-D-ribose 1-phosphate = 2-deoxy-D-ribose 5-phosphate. The catalysed reaction is alpha-D-ribose 1-phosphate = D-ribose 5-phosphate. It functions in the pathway carbohydrate degradation; 2-deoxy-D-ribose 1-phosphate degradation; D-glyceraldehyde 3-phosphate and acetaldehyde from 2-deoxy-alpha-D-ribose 1-phosphate: step 1/2. Functionally, isomerase that catalyzes the conversion of deoxy-ribose 1-phosphate (dRib-1-P) and ribose 1-phosphate (Rib-1-P) to deoxy-ribose 5-phosphate (dRib-5-P) and ribose 5-phosphate (Rib-5-P), respectively. The polypeptide is Phosphopentomutase (Oceanobacillus iheyensis (strain DSM 14371 / CIP 107618 / JCM 11309 / KCTC 3954 / HTE831)).